The following is a 121-amino-acid chain: Large ribosomal subunit protein bL19 (121 aa).

It belongs to the bacterial ribosomal protein bL19 family.

Its function is as follows. This protein is located at the 30S-50S ribosomal subunit interface and may play a role in the structure and function of the aminoacyl-tRNA binding site. This is Large ribosomal subunit protein bL19 from Amoebophilus asiaticus (strain 5a2).